A 267-amino-acid polypeptide reads, in one-letter code: MQKRKTVLDIQRMKAEGEKIAMLTAYDYPFARLMDLEGIDMVLVGDSVGPVVAGYDHTLPVTMDEMIYHCRAVARGLGQAFLVADMPFLSYQVDLREARLNAGRLVKEGCAQAVKLEGGEPVAEVIRTLVDMDIPVVGHIGLTPQSIHRMGGYKVQGKHDQQARQLMRDARAVQEAGAFAVVLEGIPAGLAGQITEALDIPTIGIGAGVDCDGQVLVIHDILGLCEKYSPRFVKRYADVASIIRQGVKEYIGDVKQGVFPGPEHSFS.

2 residues coordinate Mg(2+): Asp-46 and Asp-85. Residues 46-47 (DS), Asp-85, and Lys-115 each bind 3-methyl-2-oxobutanoate. Glu-117 lines the Mg(2+) pocket. Glu-184 functions as the Proton acceptor in the catalytic mechanism.

The protein belongs to the PanB family. Homodecamer; pentamer of dimers. Mg(2+) serves as cofactor.

It localises to the cytoplasm. The catalysed reaction is 3-methyl-2-oxobutanoate + (6R)-5,10-methylene-5,6,7,8-tetrahydrofolate + H2O = 2-dehydropantoate + (6S)-5,6,7,8-tetrahydrofolate. The protein operates within cofactor biosynthesis; (R)-pantothenate biosynthesis; (R)-pantoate from 3-methyl-2-oxobutanoate: step 1/2. In terms of biological role, catalyzes the reversible reaction in which hydroxymethyl group from 5,10-methylenetetrahydrofolate is transferred onto alpha-ketoisovalerate to form ketopantoate. This chain is 3-methyl-2-oxobutanoate hydroxymethyltransferase, found in Syntrophotalea carbinolica (strain DSM 2380 / NBRC 103641 / GraBd1) (Pelobacter carbinolicus).